The chain runs to 1168 residues: DNA-directed RNA polymerase subunit beta (1168 aa).

Belongs to the RNA polymerase beta chain family. The RNAP catalytic core consists of 2 alpha, 1 beta, 1 beta' and 1 omega subunit. When a sigma factor is associated with the core the holoenzyme is formed, which can initiate transcription.

It catalyses the reaction RNA(n) + a ribonucleoside 5'-triphosphate = RNA(n+1) + diphosphate. DNA-dependent RNA polymerase catalyzes the transcription of DNA into RNA using the four ribonucleoside triphosphates as substrates. The protein is DNA-directed RNA polymerase subunit beta of Corynebacterium kroppenstedtii (strain DSM 44385 / JCM 11950 / CIP 105744 / CCUG 35717).